Here is a 256-residue protein sequence, read N- to C-terminus: Imidazole glycerol phosphate synthase subunit HisF (256 aa).

Residues aspartate 11 and aspartate 130 contribute to the active site.

The protein belongs to the HisA/HisF family. As to quaternary structure, heterodimer of HisH and HisF.

It localises to the cytoplasm. It carries out the reaction 5-[(5-phospho-1-deoxy-D-ribulos-1-ylimino)methylamino]-1-(5-phospho-beta-D-ribosyl)imidazole-4-carboxamide + L-glutamine = D-erythro-1-(imidazol-4-yl)glycerol 3-phosphate + 5-amino-1-(5-phospho-beta-D-ribosyl)imidazole-4-carboxamide + L-glutamate + H(+). The protein operates within amino-acid biosynthesis; L-histidine biosynthesis; L-histidine from 5-phospho-alpha-D-ribose 1-diphosphate: step 5/9. IGPS catalyzes the conversion of PRFAR and glutamine to IGP, AICAR and glutamate. The HisF subunit catalyzes the cyclization activity that produces IGP and AICAR from PRFAR using the ammonia provided by the HisH subunit. The chain is Imidazole glycerol phosphate synthase subunit HisF from Psychrobacter sp. (strain PRwf-1).